Here is a 150-residue protein sequence, read N- to C-terminus: Large ribosomal subunit protein uL13 (150 aa).

The protein belongs to the universal ribosomal protein uL13 family. As to quaternary structure, part of the 50S ribosomal subunit.

This protein is one of the early assembly proteins of the 50S ribosomal subunit, although it is not seen to bind rRNA by itself. It is important during the early stages of 50S assembly. This is Large ribosomal subunit protein uL13 from Chlamydia trachomatis serovar A (strain ATCC VR-571B / DSM 19440 / HAR-13).